A 54-amino-acid polypeptide reads, in one-letter code: UPF0391 membrane protein TERTU_3637 (54 aa).

A run of 2 helical transmembrane segments spans residues 4–24 (WALV…TGLA) and 29–49 (SIAW…LVAG).

It belongs to the UPF0391 family.

The protein resides in the cell membrane. The protein is UPF0391 membrane protein TERTU_3637 of Teredinibacter turnerae (strain ATCC 39867 / T7901).